A 129-amino-acid polypeptide reads, in one-letter code: 3-aminoacrylate deaminase RutC (129 aa).

This sequence belongs to the RutC family.

It carries out the reaction (Z)-3-aminoacrylate + H2O + H(+) = 3-oxopropanoate + NH4(+). Involved in pyrimidine catabolism. Catalyzes the deamination of 3-aminoacrylate to malonic semialdehyde, a reaction that can also occur spontaneously. RutC may facilitate the reaction and modulate the metabolic fitness, rather than catalyzing essential functions. This Rhizobium rhizogenes (strain K84 / ATCC BAA-868) (Agrobacterium radiobacter) protein is 3-aminoacrylate deaminase RutC.